Here is a 146-residue protein sequence, read N- to C-terminus: uncharacterized protein (146 aa).

The segment at 67–93 is disordered; it reads DDNGMESGFCSGATSTGQSASTSPAPV. Low complexity predominate over residues 77 to 92; the sequence is SGATSTGQSASTSPAP.

This is an uncharacterized protein from Caenorhabditis elegans.